A 269-amino-acid chain; its full sequence is Cytochrome c oxidase subunit 3 (269 aa).

Helical transmembrane passes span Phe24–Phe44, Asn46–Phe66, Gly90–Phe110, Ile132–Val152, Ala167–Ile187, Phe207–Leu227, and Ile247–Trp267.

Belongs to the cytochrome c oxidase subunit 3 family. Component of the cytochrome c oxidase (complex IV, CIV), a multisubunit enzyme composed of a catalytic core of 3 subunits and several supernumerary subunits. The complex exists as a monomer or a dimer and forms supercomplexes (SCs) in the inner mitochondrial membrane with ubiquinol-cytochrome c oxidoreductase (cytochrome b-c1 complex, complex III, CIII).

The protein resides in the mitochondrion inner membrane. The enzyme catalyses 4 Fe(II)-[cytochrome c] + O2 + 8 H(+)(in) = 4 Fe(III)-[cytochrome c] + 2 H2O + 4 H(+)(out). Its function is as follows. Component of the cytochrome c oxidase, the last enzyme in the mitochondrial electron transport chain which drives oxidative phosphorylation. The respiratory chain contains 3 multisubunit complexes succinate dehydrogenase (complex II, CII), ubiquinol-cytochrome c oxidoreductase (cytochrome b-c1 complex, complex III, CIII) and cytochrome c oxidase (complex IV, CIV), that cooperate to transfer electrons derived from NADH and succinate to molecular oxygen, creating an electrochemical gradient over the inner membrane that drives transmembrane transport and the ATP synthase. Cytochrome c oxidase is the component of the respiratory chain that catalyzes the reduction of oxygen to water. Electrons originating from reduced cytochrome c in the intermembrane space (IMS) are transferred via the dinuclear copper A center (CU(A)) of subunit 2 and heme A of subunit 1 to the active site in subunit 1, a binuclear center (BNC) formed by heme A3 and copper B (CU(B)). The BNC reduces molecular oxygen to 2 water molecules using 4 electrons from cytochrome c in the IMS and 4 protons from the mitochondrial matrix. This chain is Cytochrome c oxidase subunit 3 (COXIII), found in Trichophyton rubrum (Athlete's foot fungus).